The chain runs to 128 residues: DNA-directed RNA polymerase subunit omega (128 aa).

It belongs to the RNA polymerase subunit omega family. In terms of assembly, the RNAP catalytic core consists of 2 alpha, 1 beta, 1 beta' and 1 omega subunit. When a sigma factor is associated with the core the holoenzyme is formed, which can initiate transcription.

The catalysed reaction is RNA(n) + a ribonucleoside 5'-triphosphate = RNA(n+1) + diphosphate. Functionally, promotes RNA polymerase assembly. Latches the N- and C-terminal regions of the beta' subunit thereby facilitating its interaction with the beta and alpha subunits. In Azorhizobium caulinodans (strain ATCC 43989 / DSM 5975 / JCM 20966 / LMG 6465 / NBRC 14845 / NCIMB 13405 / ORS 571), this protein is DNA-directed RNA polymerase subunit omega.